The primary structure comprises 86 residues: MATLLTTDDLRRALVECAGETDGTDLSGDFLDLRFEDIGYDSLALMETAARLESRYGVSIPDDVAGRVDTPRELLDLINGALAEAA.

The 79-residue stretch at 4–82 folds into the Carrier domain; it reads LLTTDDLRRA…ELLDLINGAL (79 aa). Ser-42 carries the O-(pantetheine 4'-phosphoryl)serine modification.

4'-phosphopantetheine is transferred from CoA to a specific serine of the apo-ACP-like protein.

It participates in antibiotic biosynthesis; actinorhodin biosynthesis. Acyl carrier protein. The protein is Actinorhodin polyketide synthase acyl carrier protein of Streptomyces coelicolor (strain ATCC BAA-471 / A3(2) / M145).